The primary structure comprises 335 residues: 2-acylglycerol O-acyltransferase 2 (335 aa).

The next 2 helical transmembrane spans lie at 24 to 44 (WAVSFLAMAQCCIALYILLLF) and 104 to 124 (YIMGFHPHGVLVVGAFGNFCT). N206 is a glycosylation site (N-linked (GlcNAc...) asparagine).

Belongs to the diacylglycerol acyltransferase family.

The protein localises to the endoplasmic reticulum membrane. It localises to the cytoplasm. Its subcellular location is the perinuclear region. The catalysed reaction is a 2-acylglycerol + an acyl-CoA = a 1,2-diacylglycerol + CoA. The enzyme catalyses a 2-acylglycerol + an acyl-CoA = a 1,2-diacyl-sn-glycerol + CoA. It catalyses the reaction a 2-acylglycerol + an acyl-CoA = a 2,3-diacyl-sn-glycerol + CoA. It carries out the reaction a 1-acylglycerol + an acyl-CoA = a 1,2-diacylglycerol + CoA. The catalysed reaction is a 1-acylglycerol + an acyl-CoA = a 1,3-diacylglycerol + CoA. The enzyme catalyses 1-O-alkylglycerol + an acyl-CoA = 1-O-alkyl-3-acylglycerol + CoA. It catalyses the reaction an acyl-CoA + a 1,2-diacyl-sn-glycerol = a triacyl-sn-glycerol + CoA. It participates in glycerolipid metabolism; triacylglycerol biosynthesis. Involved in glycerolipid synthesis and lipid metabolism. Catalyzes the formation of diacylglycerol, the precursor of triacylglycerol, by transferring the acyl chain of a fatty acyl-CoA to a monoacylglycerol. Plays a central role in absorption of dietary fat in the small intestine by catalyzing the resynthesis of triacylglycerol in enterocytes. Has a preference toward monoacylglycerols containing unsaturated fatty acids in an order of C18:3 &gt; C18:2 &gt; C18:1 &gt; C18:0 at sn-2. Able to use 1-monoalkylglycerol (1-MAkG, 1-O-alkylglycerol) as an acyl acceptor for the synthesis of monoalkyl-monoacylglycerol (MAMAG, 1-O-alkyl-3-acylglycerol or 1-O-alkyl-2-acylglycerol) and subsequently, with lower efficiency, may add another acyl chain producing monoalkyl-diacylglycerol (MADAG, 1-O-alkyl-2,3-diacylglycerol). Possesses weak but significant activity with diacylglycerol as substrate, producing triacylglycerol (triacyl-sn-glycerol). The chain is 2-acylglycerol O-acyltransferase 2 (mogat2) from Xenopus tropicalis (Western clawed frog).